We begin with the raw amino-acid sequence, 652 residues long: Starch synthase 1, chloroplastic/amyloplastic (652 aa).

The N-terminal 49 residues, 1-49, are a transit peptide targeting the chloroplast; the sequence is MASLQISGSVKFEPFVGFNRIRHFRPIASLGFPRFRRRFSIGRSLLLRR. Lys156 provides a ligand contact to ADP-alpha-D-glucose.

It belongs to the glycosyltransferase 1 family. Bacterial/plant glycogen synthase subfamily. In terms of tissue distribution, expressed in roots, leaves, stems, buds and flowers.

Its subcellular location is the plastid. The protein localises to the chloroplast. It localises to the amyloplast. It catalyses the reaction [(1-&gt;4)-alpha-D-glucosyl](n) + ADP-alpha-D-glucose = [(1-&gt;4)-alpha-D-glucosyl](n+1) + ADP + H(+). It functions in the pathway glycan biosynthesis; starch biosynthesis. Its function is as follows. Involved in the synthesis of short glycan chains within amylopectin in leaves. Is required to generate chains up to about a degree of polymerization of 10 (DP10). This chain is Starch synthase 1, chloroplastic/amyloplastic (SS1), found in Arabidopsis thaliana (Mouse-ear cress).